The primary structure comprises 558 residues: T-complex protein 1 subunit gamma (558 aa).

Residues Cys381 and Cys387 are joined by a disulfide bond.

Belongs to the TCP-1 chaperonin family. Heterooligomeric complex of about 850 to 900 kDa that forms two stacked rings, 12 to 16 nm in diameter.

It localises to the cytoplasm. Functionally, molecular chaperone; assists the folding of proteins upon ATP hydrolysis. Known to play a role, in vitro, in the folding of actin and tubulin. The polypeptide is T-complex protein 1 subunit gamma (Thalassiosira weissflogii (Marine diatom)).